Here is a 137-residue protein sequence, read N- to C-terminus: Large ribosomal subunit protein uL16 (137 aa).

The protein belongs to the universal ribosomal protein uL16 family. As to quaternary structure, part of the 50S ribosomal subunit.

Functionally, binds 23S rRNA and is also seen to make contacts with the A and possibly P site tRNAs. The protein is Large ribosomal subunit protein uL16 of Leptospira biflexa serovar Patoc (strain Patoc 1 / Ames).